The chain runs to 309 residues: Taste receptor type 2 member 20 (309 aa).

Residues 1–6 (MMSFLH) lie on the Extracellular side of the membrane. A helical transmembrane segment spans residues 7-27 (IVFSILVVVAFILGNFANGFI). Over 28–46 (ALINFIAWVKRQKISSADQ) the chain is Cytoplasmic. A helical transmembrane segment spans residues 47–67 (IIAALAVSRVGLLWVILLHWY). Over 68 to 79 (STVLNPTSSNLK) the chain is Extracellular. Residues 80–100 (VTIFISNAWAVTNHFSIWLAA) traverse the membrane as a helical segment. Residues 101 to 125 (SLSIFYLLKIVNFSRLIFHHLKRKA) are Cytoplasmic-facing. The chain crosses the membrane as a helical span at residues 126–146 (KSVVLVIVLGSLFFLVCHLVM). At 147 to 178 (KSTYINVWTEEYEGNVTWKIKLRNAMHLSNLT) the chain is on the extracellular side. 2 N-linked (GlcNAc...) asparagine glycosylation sites follow: asparagine 161 and asparagine 176. Residues 179–199 (VAMLANLIPFTLTLISFLLLI) form a helical membrane-spanning segment. At 200 to 229 (YSLCKHLKKMQLHGKGSQDPSTKIHIKALQ) the chain is on the cytoplasmic side. The helical transmembrane segment at 230-250 (TVTSFLILLAIYFLCLITSFW) threads the bilayer. Residues 251 to 259 (NSKMRPKEI) lie on the Extracellular side of the membrane. Residues 260–280 (VLMLCQAFGIIYPSFHSFILI) form a helical membrane-spanning segment. At 281–309 (WGNKTLKQTFLSVLWRVTCWAKGQNQSTP) the chain is on the cytoplasmic side.

Belongs to the G-protein coupled receptor T2R family.

Its subcellular location is the membrane. Functionally, receptor that may play a role in the perception of bitterness and is gustducin-linked. May play a role in sensing the chemical composition of the gastrointestinal content. The activity of this receptor may stimulate alpha gustducin, mediate PLC-beta-2 activation and lead to the gating of TRPM5. The polypeptide is Taste receptor type 2 member 20 (TAS2R20) (Gorilla gorilla gorilla (Western lowland gorilla)).